The sequence spans 340 residues: Uroporphyrinogen decarboxylase (340 aa).

Substrate-binding positions include 21 to 25, D71, Y148, S203, and H316; that span reads RQAGR.

The protein belongs to the uroporphyrinogen decarboxylase family. In terms of assembly, homodimer.

The protein resides in the cytoplasm. It carries out the reaction uroporphyrinogen III + 4 H(+) = coproporphyrinogen III + 4 CO2. It participates in porphyrin-containing compound metabolism; protoporphyrin-IX biosynthesis; coproporphyrinogen-III from 5-aminolevulinate: step 4/4. Catalyzes the decarboxylation of four acetate groups of uroporphyrinogen-III to yield coproporphyrinogen-III. The polypeptide is Uroporphyrinogen decarboxylase (Campylobacter jejuni (strain RM1221)).